The following is a 241-amino-acid chain: 6-hydroxymethyl-7,8-dihydropterin pyrophosphokinase (241 aa).

The protein belongs to the archaeal 6-HMPDK family. Mg(2+) is required as a cofactor.

It catalyses the reaction 6-hydroxymethyl-7,8-dihydropterin + ATP = (7,8-dihydropterin-6-yl)methyl diphosphate + AMP + H(+). It participates in cofactor biosynthesis; 5,6,7,8-tetrahydromethanopterin biosynthesis. Functionally, catalyzes the transfer of diphosphate from ATP to 6-hydroxymethyl-7,8-dihydropterin (6-HMD), leading to 6-hydroxymethyl-7,8-dihydropterin diphosphate (6-HMDP). The chain is 6-hydroxymethyl-7,8-dihydropterin pyrophosphokinase from Methanocaldococcus jannaschii (strain ATCC 43067 / DSM 2661 / JAL-1 / JCM 10045 / NBRC 100440) (Methanococcus jannaschii).